Here is a 427-residue protein sequence, read N- to C-terminus: Glutamate-1-semialdehyde 2,1-aminomutase 1 (427 aa).

K267 carries the N6-(pyridoxal phosphate)lysine modification.

It belongs to the class-III pyridoxal-phosphate-dependent aminotransferase family. HemL subfamily. In terms of assembly, homodimer. Pyridoxal 5'-phosphate serves as cofactor.

It is found in the cytoplasm. The catalysed reaction is (S)-4-amino-5-oxopentanoate = 5-aminolevulinate. The protein operates within porphyrin-containing compound metabolism; protoporphyrin-IX biosynthesis; 5-aminolevulinate from L-glutamyl-tRNA(Glu): step 2/2. The chain is Glutamate-1-semialdehyde 2,1-aminomutase 1 from Macrococcus caseolyticus (strain JCSC5402) (Macrococcoides caseolyticum).